Reading from the N-terminus, the 261-residue chain is MYSGNGLAVRVIPCLDVYCGRVVKGVNFKNLRDAGDLVELAAAYDAEGADELAFLDVTASSSGRATMLEVVRCTAEQVFIPLMVGGGVRTVADVDVLLRAGADKVAVNTAAIARPELLADMAGQFGSQCIVLSVDARTVPTGSARTPSGWEATTHGGYRGTGIDAVEWAARGADLGVGEILLNSMDADGTKAGFDLAMLRAVRAAVTVPVIASGGAGAIEHFVPAVTAGADAVLAASVFHFRELTIGQVKDAMAAAGIAVR.

Residues aspartate 16 and aspartate 135 contribute to the active site.

This sequence belongs to the HisA/HisF family. As to quaternary structure, heterodimer of HisH and HisF.

It is found in the cytoplasm. It carries out the reaction 5-[(5-phospho-1-deoxy-D-ribulos-1-ylimino)methylamino]-1-(5-phospho-beta-D-ribosyl)imidazole-4-carboxamide + L-glutamine = D-erythro-1-(imidazol-4-yl)glycerol 3-phosphate + 5-amino-1-(5-phospho-beta-D-ribosyl)imidazole-4-carboxamide + L-glutamate + H(+). Its pathway is amino-acid biosynthesis; L-histidine biosynthesis; L-histidine from 5-phospho-alpha-D-ribose 1-diphosphate: step 5/9. IGPS catalyzes the conversion of PRFAR and glutamine to IGP, AICAR and glutamate. The HisF subunit catalyzes the cyclization activity that produces IGP and AICAR from PRFAR using the ammonia provided by the HisH subunit. In Mycobacterium leprae (strain Br4923), this protein is Imidazole glycerol phosphate synthase subunit HisF.